The sequence spans 377 residues: All-trans-retinol dehydrogenase [NAD(+)] ADH4 (377 aa).

Position 47 (cysteine 47) interacts with Zn(2+). Threonine 49 provides a ligand contact to NAD(+). Positions 68, 98, 101, 104, 112, and 179 each coordinate Zn(2+). NAD(+) is bound by residues glycine 204–glycine 209, aspartate 228, lysine 233, valine 297–alanine 299, threonine 320–phenylalanine 322, and arginine 372.

The protein belongs to the zinc-containing alcohol dehydrogenase family. Class-II subfamily. Dimer. Zn(2+) serves as cofactor. Liver specific.

Its subcellular location is the cytoplasm. The catalysed reaction is all-trans-retinol + NAD(+) = all-trans-retinal + NADH + H(+). The enzyme catalyses 9-cis-retinol + NAD(+) = 9-cis-retinal + NADH + H(+). It carries out the reaction 20-hydroxy-(5Z,8Z,11Z,14Z)-eicosatetraenoate + NAD(+) = 20-oxo-(5Z,8Z,11Z,14Z)-eicosatetraenoate + NADH + H(+). It catalyses the reaction 20-oxo-(5Z,8Z,11Z,14Z)-eicosatetraenoate + NAD(+) + H2O = (5Z,8Z,11Z,14Z)-eicosatetraenedioate + NADH + 2 H(+). The catalysed reaction is 1,4-benzoquinone + NADH + H(+) = hydroquinone + NAD(+). Oxidation of 20-HETE is inhibited by low concentrations of N-heptylformamide. Oxidation of 20-HETE is a decreased by 55-65% by either all-trans-retinol or all-trans-retinoic acid. Strongly inhibited by omega-hydroxy fatty acids. Functionally, catalyzes the NAD-dependent oxidation of either all-trans-retinol or 9-cis-retinol. Also oxidizes long chain omega-hydroxy fatty acids, such as 20-HETE, producing both the intermediate aldehyde, 20-oxoarachidonate and the end product, a dicarboxylic acid, (5Z,8Z,11Z,14Z)-eicosatetraenedioate. Also catalyzes the reduction of benzoquinones. This is All-trans-retinol dehydrogenase [NAD(+)] ADH4 from Mus musculus (Mouse).